Consider the following 245-residue polypeptide: Uridylate kinase (245 aa).

ATP is bound at residue 12 to 15 (KLSG). The interval 20–25 (GERGVG) is involved in allosteric activation by GTP. A UMP-binding site is contributed by glycine 54. ATP is bound by residues glycine 55 and arginine 59. UMP-binding positions include aspartate 74 and 135–142 (IGSPYFST). Residues asparagine 163, tyrosine 169, and aspartate 172 each contribute to the ATP site.

It belongs to the UMP kinase family. In terms of assembly, homohexamer.

It is found in the cytoplasm. The catalysed reaction is UMP + ATP = UDP + ADP. It participates in pyrimidine metabolism; CTP biosynthesis via de novo pathway; UDP from UMP (UMPK route): step 1/1. Allosterically activated by GTP. Inhibited by UTP. Functionally, catalyzes the reversible phosphorylation of UMP to UDP. This chain is Uridylate kinase, found in Streptococcus pneumoniae serotype 2 (strain D39 / NCTC 7466).